The sequence spans 118 residues: Sporulation protein YjcA (118 aa).

Helical transmembrane passes span 8-28 (IVLL…DTIM), 62-82 (FIGE…GFLI), and 92-112 (AQWL…ETLV).

It belongs to the UPF0713 family.

It localises to the cell membrane. Its function is as follows. Involved in sporulation. This Bacillus subtilis (strain 168) protein is Sporulation protein YjcA (yjcA).